We begin with the raw amino-acid sequence, 304 residues long: Small ribosomal subunit biogenesis GTPase RsgA (304 aa).

Residues 70–229 (HNELNRPNIA…IADTPGFSKL (160 aa)) enclose the CP-type G domain. GTP contacts are provided by residues 119–122 (TKID) and 172–180 (GQTGVGKST). 4 residues coordinate Zn(2+): C253, C259, H261, and C267.

The protein belongs to the TRAFAC class YlqF/YawG GTPase family. RsgA subfamily. As to quaternary structure, monomer. Associates with 30S ribosomal subunit, binds 16S rRNA. Zn(2+) serves as cofactor.

The protein resides in the cytoplasm. In terms of biological role, one of several proteins that assist in the late maturation steps of the functional core of the 30S ribosomal subunit. Helps release RbfA from mature subunits. May play a role in the assembly of ribosomal proteins into the subunit. Circularly permuted GTPase that catalyzes slow GTP hydrolysis, GTPase activity is stimulated by the 30S ribosomal subunit. The chain is Small ribosomal subunit biogenesis GTPase RsgA from Phytoplasma mali (strain AT).